Reading from the N-terminus, the 211-residue chain is ATP-dependent Clp protease proteolytic subunit (211 aa).

Residue Ser114 is the Nucleophile of the active site. Residue His139 is part of the active site.

It belongs to the peptidase S14 family. Fourteen ClpP subunits assemble into 2 heptameric rings which stack back to back to give a disk-like structure with a central cavity, resembling the structure of eukaryotic proteasomes.

Its subcellular location is the cytoplasm. It carries out the reaction Hydrolysis of proteins to small peptides in the presence of ATP and magnesium. alpha-casein is the usual test substrate. In the absence of ATP, only oligopeptides shorter than five residues are hydrolyzed (such as succinyl-Leu-Tyr-|-NHMec, and Leu-Tyr-Leu-|-Tyr-Trp, in which cleavage of the -Tyr-|-Leu- and -Tyr-|-Trp bonds also occurs).. Cleaves peptides in various proteins in a process that requires ATP hydrolysis. Has a chymotrypsin-like activity. Plays a major role in the degradation of misfolded proteins. The chain is ATP-dependent Clp protease proteolytic subunit from Pseudomonas fluorescens (strain Pf0-1).